A 139-amino-acid chain; its full sequence is Large ribosomal subunit protein bL20 (139 aa).

This sequence belongs to the bacterial ribosomal protein bL20 family.

In terms of biological role, binds directly to 23S ribosomal RNA and is necessary for the in vitro assembly process of the 50S ribosomal subunit. It is not involved in the protein synthesizing functions of that subunit. In Leuconostoc citreum (strain KM20), this protein is Large ribosomal subunit protein bL20.